The chain runs to 310 residues: Ribosomal RNA small subunit methyltransferase H (310 aa).

S-adenosyl-L-methionine is bound by residues 32–34 (GGH), Asp52, Phe79, Asp100, and Gln107.

This sequence belongs to the methyltransferase superfamily. RsmH family.

It localises to the cytoplasm. It carries out the reaction cytidine(1402) in 16S rRNA + S-adenosyl-L-methionine = N(4)-methylcytidine(1402) in 16S rRNA + S-adenosyl-L-homocysteine + H(+). Functionally, specifically methylates the N4 position of cytidine in position 1402 (C1402) of 16S rRNA. The polypeptide is Ribosomal RNA small subunit methyltransferase H (Bacillus cereus (strain B4264)).